Reading from the N-terminus, the 139-residue chain is D-ribose pyranase (139 aa).

Histidine 20 acts as the Proton donor in catalysis. Substrate is bound by residues aspartate 28, histidine 106, and tyrosine 128–asparagine 130.

Belongs to the RbsD / FucU family. RbsD subfamily. Homodecamer.

It is found in the cytoplasm. It carries out the reaction beta-D-ribopyranose = beta-D-ribofuranose. It participates in carbohydrate metabolism; D-ribose degradation; D-ribose 5-phosphate from beta-D-ribopyranose: step 1/2. Catalyzes the interconversion of beta-pyran and beta-furan forms of D-ribose. The sequence is that of D-ribose pyranase from Salmonella agona (strain SL483).